The following is a 415-amino-acid chain: Chorismate synthase (415 aa).

The interval 43–72 (EDLDRRKPGQSMITTSRGEPDKVSIKSGLQ) is disordered. Arginine 48 is a binding site for NADP(+). FMN is bound by residues 125-127 (RSS), glycine 304, 319-323 (HAPVS), and arginine 346. Residues 262–310 (TDYTEDWEFGESEATASENASGDEPRARGDPKPVGNDHGGIQGGITTGD) are disordered. The span at 298 to 307 (DHGGIQGGIT) shows a compositional bias: gly residues. Residues 379–393 (PDRLDDRPGEYDTDY) show a composition bias toward basic and acidic residues. The segment at 379 to 415 (PDRLDDRPGEYDTDYHPSSPRNDPEDADTHATTVDED) is disordered.

This sequence belongs to the chorismate synthase family. Requires FMNH2 as cofactor.

It carries out the reaction 5-O-(1-carboxyvinyl)-3-phosphoshikimate = chorismate + phosphate. Its pathway is metabolic intermediate biosynthesis; chorismate biosynthesis; chorismate from D-erythrose 4-phosphate and phosphoenolpyruvate: step 7/7. In terms of biological role, catalyzes the anti-1,4-elimination of the C-3 phosphate and the C-6 proR hydrogen from 5-enolpyruvylshikimate-3-phosphate (EPSP) to yield chorismate, which is the branch point compound that serves as the starting substrate for the three terminal pathways of aromatic amino acid biosynthesis. This reaction introduces a second double bond into the aromatic ring system. In Halomicrobium mukohataei (strain ATCC 700874 / DSM 12286 / JCM 9738 / NCIMB 13541) (Haloarcula mukohataei), this protein is Chorismate synthase.